Here is a 233-residue protein sequence, read N- to C-terminus: Phosphatidylserine decarboxylase proenzyme (233 aa).

Residue serine 190 is the Schiff-base intermediate with substrate; via pyruvic acid of the active site. Position 190 is a pyruvic acid (Ser); by autocatalysis (serine 190).

It belongs to the phosphatidylserine decarboxylase family. PSD-A subfamily. In terms of assembly, heterodimer of a large membrane-associated beta subunit and a small pyruvoyl-containing alpha subunit. Requires pyruvate as cofactor. Is synthesized initially as an inactive proenzyme. Formation of the active enzyme involves a self-maturation process in which the active site pyruvoyl group is generated from an internal serine residue via an autocatalytic post-translational modification. Two non-identical subunits are generated from the proenzyme in this reaction, and the pyruvate is formed at the N-terminus of the alpha chain, which is derived from the carboxyl end of the proenzyme. The post-translation cleavage follows an unusual pathway, termed non-hydrolytic serinolysis, in which the side chain hydroxyl group of the serine supplies its oxygen atom to form the C-terminus of the beta chain, while the remainder of the serine residue undergoes an oxidative deamination to produce ammonia and the pyruvoyl prosthetic group on the alpha chain.

The protein localises to the cell membrane. The enzyme catalyses a 1,2-diacyl-sn-glycero-3-phospho-L-serine + H(+) = a 1,2-diacyl-sn-glycero-3-phosphoethanolamine + CO2. It participates in phospholipid metabolism; phosphatidylethanolamine biosynthesis; phosphatidylethanolamine from CDP-diacylglycerol: step 2/2. In terms of biological role, catalyzes the formation of phosphatidylethanolamine (PtdEtn) from phosphatidylserine (PtdSer). The protein is Phosphatidylserine decarboxylase proenzyme of Bartonella quintana (strain Toulouse) (Rochalimaea quintana).